The following is a 206-amino-acid chain: Small ribosomal subunit protein uS4 (206 aa).

Residues 96–156 (GRLDNVVYRM…EKSKKQARIK (61 aa)) enclose the S4 RNA-binding domain.

This sequence belongs to the universal ribosomal protein uS4 family. Part of the 30S ribosomal subunit. Contacts protein S5. The interaction surface between S4 and S5 is involved in control of translational fidelity.

Functionally, one of the primary rRNA binding proteins, it binds directly to 16S rRNA where it nucleates assembly of the body of the 30S subunit. With S5 and S12 plays an important role in translational accuracy. The chain is Small ribosomal subunit protein uS4 from Histophilus somni (strain 129Pt) (Haemophilus somnus).